A 321-amino-acid polypeptide reads, in one-letter code: Olfactory receptor 52P1 (321 aa).

Residues 1-27 (MESPNHTDVDPSVFFLLGIPGLEQFHL) lie on the Extracellular side of the membrane. Asn-5 is a glycosylation site (N-linked (GlcNAc...) asparagine). A helical membrane pass occupies residues 28-48 (WLSLPVCGLGTATIVGNITIL). Over 49–56 (VVVATEPV) the chain is Cytoplasmic. A helical transmembrane segment spans residues 57–77 (LHKPVYLFLCMLSTIDLAASV). At 78–101 (STVPKLLAIFWCGAGHISASACLA) the chain is on the extracellular side. A disulfide bond links Cys-99 and Cys-191. A helical transmembrane segment spans residues 102-122 (QMFFIHAFCMMESTVLLAMAF). Topologically, residues 123–141 (DRYVAICHPLRYATILTDT) are cytoplasmic. A helical transmembrane segment spans residues 142-162 (IIAHIGVAAVVRGSLLMLPCP). At 163–198 (FLIGRLNFCQSHVILHTYCEHMAVVKLACGDTRPNR) the chain is on the extracellular side. A helical transmembrane segment spans residues 199–219 (VYGLTAALLVIGVDLFCIGLS). The Cytoplasmic portion of the chain corresponds to 220–239 (YALSAQAVLRLSSHEARSKA). Residues 240 to 260 (LGTCGSHVCVILISYTPALFS) form a helical membrane-spanning segment. Over 261 to 275 (FFTHRFGHHVPVHIH) the chain is Extracellular. Residues 276 to 296 (ILLANVYLLLPPALNPVVYGV) form a helical membrane-spanning segment. The Cytoplasmic portion of the chain corresponds to 297 to 315 (KTKQIRKRVVRVFQSGQGM).

This sequence belongs to the G-protein coupled receptor 1 family.

The protein resides in the cell membrane. Its function is as follows. Odorant receptor. This is Olfactory receptor 52P1 from Homo sapiens (Human).